We begin with the raw amino-acid sequence, 723 residues long: MMQRRSPPKHRHDGTSPLPLGMDWSPPPRKWNGRDTVWPHDPRTGWSYCVTIPSWIVLPKSRNSDPVVFYRVQVSVQSPEGITTMRGVLRRFNDFLKLLTDLKRTFPRKGFPSAPPKGLLRMKSRAVLEERRCSLEEWITKLLSDIELARSVVVASFLELEAAARSACQDVDQNASDSNNDRSSTSSSPMVHPSLSLFHAGGSTLTSDYGSDTAYETSEVGSPSVGQDDISEIGTEDLTLDEDLTLTNPIEKLVNFSMSNIDEGLSMSETILEQLEDFPKHKVRSRYVNNILGKDVYNGNASKGVFLANNGSRLLSEPEPSTHSVMHDRNDSAERFALHTGQTSTSGLLISSRDSHLDLRQGPGVSLGTGLVCNPERQGSAQIVLPLELRNKLNRILLATNERLVNAKTDMEDLIARLNQEIAVKDYLNKKVNDLEGELETTKQRSKENLEQAIMSERERFNQMQWDMEELRQKSYEMEMKLKSREDGSSHAEPTVQSTISEKHVLSKELDARKQQLEDLSRRYEELEAKSKADMKVLVKEVKSLRRSHVELEKELTHSLTDKTNAEKLLQEERKLLENTVAARKKLLSDCRILHDRLKEYNLNLSMDGNGNFVDDSTTISDVLRLLSISDDQIEEAQLLSGFDENAAAEDIDKTLSMDTETRIMEDELRKILANIFVENAKLRKQVNSAMLRALQKDVKTTEDVNEENSDEKDEASRETLKR.

The segment covering 1-12 (MMQRRSPPKHRH) has biased composition (basic residues). Residues 1 to 26 (MMQRRSPPKHRHDGTSPLPLGMDWSP) are disordered. Residues 48–165 (YCVTIPSWIV…SFLELEAAAR (118 aa)) enclose the PX domain. Disordered stretches follow at residues 169 to 193 (QDVD…MVHP) and 209 to 230 (YGSD…QDDI). Positions 172 to 193 (DQNASDSNNDRSSTSSSPMVHP) are enriched in low complexity. Positions 209 to 225 (YGSDTAYETSEVGSPSV) are enriched in polar residues. Coiled-coil stretches lie at residues 401 to 474 (NERL…LRQK) and 503 to 555 (KHVL…LEKE). Residues 698–723 (DVKTTEDVNEENSDEKDEASRETLKR) form a disordered region. Over residues 704–714 (DVNEENSDEKD) the composition is skewed to acidic residues.

Its subcellular location is the cytoplasm. The protein localises to the cytosol. The protein resides in the endosome membrane. Its function is as follows. Acts as an effector of RABF2A and RABF2B. Involved in vacuolar transport of storage proteins. Regulates membrane trafficking to protein storage vacuoles (PSVs). Binds specifically to phosphatidylinositol 3-monophosphate (PtdIns3P). This chain is PX domain-containing protein EREL1, found in Arabidopsis thaliana (Mouse-ear cress).